The primary structure comprises 211 residues: FMN-dependent NADH:quinone oxidoreductase 2 (211 aa).

102–105 (MWNF) contributes to the FMN binding site.

Belongs to the azoreductase type 1 family. Homodimer. FMN serves as cofactor.

It carries out the reaction 2 a quinone + NADH + H(+) = 2 a 1,4-benzosemiquinone + NAD(+). It catalyses the reaction N,N-dimethyl-1,4-phenylenediamine + anthranilate + 2 NAD(+) = 2-(4-dimethylaminophenyl)diazenylbenzoate + 2 NADH + 2 H(+). Quinone reductase that provides resistance to thiol-specific stress caused by electrophilic quinones. In terms of biological role, also exhibits azoreductase activity. Catalyzes the reductive cleavage of the azo bond in aromatic azo compounds to the corresponding amines. The polypeptide is FMN-dependent NADH:quinone oxidoreductase 2 (Bacillus cereus (strain ATCC 14579 / DSM 31 / CCUG 7414 / JCM 2152 / NBRC 15305 / NCIMB 9373 / NCTC 2599 / NRRL B-3711)).